Here is a 188-residue protein sequence, read N- to C-terminus: uncharacterized protein (188 aa).

Positions Met-1 to Gly-23 are cleaved as a signal peptide. Asn-74 carries N-linked (GlcNAc...) asparagine glycosylation.

This is an uncharacterized protein from Mus musculus (Mouse).